Consider the following 115-residue polypeptide: Phosphoribosyl-AMP cyclohydrolase (115 aa).

Residue aspartate 80 participates in Mg(2+) binding. Residue cysteine 81 participates in Zn(2+) binding. Aspartate 82 and aspartate 84 together coordinate Mg(2+). The Zn(2+) site is built by cysteine 97 and cysteine 104.

The protein belongs to the PRA-CH family. Homodimer. It depends on Mg(2+) as a cofactor. The cofactor is Zn(2+).

It localises to the cytoplasm. It catalyses the reaction 1-(5-phospho-beta-D-ribosyl)-5'-AMP + H2O = 1-(5-phospho-beta-D-ribosyl)-5-[(5-phospho-beta-D-ribosylamino)methylideneamino]imidazole-4-carboxamide. It participates in amino-acid biosynthesis; L-histidine biosynthesis; L-histidine from 5-phospho-alpha-D-ribose 1-diphosphate: step 3/9. Functionally, catalyzes the hydrolysis of the adenine ring of phosphoribosyl-AMP. This Rhodococcus erythropolis (strain PR4 / NBRC 100887) protein is Phosphoribosyl-AMP cyclohydrolase.